A 228-amino-acid polypeptide reads, in one-letter code: Putative adhesin A1I_01215 (228 aa).

A signal peptide spans 1–22 (MKKLLLIAATSATVLSSALSFA).

This is Putative adhesin A1I_01215 from Rickettsia bellii (strain OSU 85-389).